The sequence spans 219 residues: Pollen-specific protein SF3 (219 aa).

LIM zinc-binding domains follow at residues 9-109 (QKCT…TRDK) and 110-167 (CNAC…QLFK). The interval 181 to 219 (VAAPAESETQNTETQNAETQNADTQNADTQNTETQNGSV) is disordered. Low complexity predominate over residues 185–202 (AESETQNTETQNAETQNA). The span at 203 to 219 (DTQNADTQNTETQNGSV) shows a compositional bias: polar residues.

As to expression, pollen.

In terms of biological role, could possibly involved in controlling pollen-specific processes such as male gamete maturation, pollen tube formation, or even fertilization. The chain is Pollen-specific protein SF3 (SF3) from Helianthus annuus (Common sunflower).